The chain runs to 492 residues: DEAD-box ATP-dependent RNA helicase RhpA (492 aa).

The Q motif signature appears at 20–48; sequence PSFNDLGLKESVLKSVYEAGFTSPSPIQE. Positions 51–220 constitute a Helicase ATP-binding domain; the sequence is IPAVLQGRDV…DKILENPIKI (170 aa). 64–71 lines the ATP pocket; the sequence is AQTGTGKT. Residues 168–171 carry the DEAD box motif; sequence DESD. The region spanning 231-393 is the Helicase C-terminal domain; it reads DITQRFYVIN…EIPTINENQI (163 aa). A disordered region spans residues 445–492; it reads AIQNPKEKTPKPSHKKTPQHERARSFKKGQHRDRHPKTNHHSKKPKRR. Residues 469-492 show a composition bias toward basic residues; the sequence is SFKKGQHRDRHPKTNHHSKKPKRR.

This sequence belongs to the DEAD box helicase family. Homodimer. Interacts with RNase J (rnj), might be a member of a minimal RNA degradosome complex.

It is found in the cytoplasm. It catalyses the reaction ATP + H2O = ADP + phosphate + H(+). DEAD-box RNA helicase probably involved in RNA degradation. Unwinds dsRNA in both 5'- and 3'-directions. Background RNA-dependent ATPase activity is stimulated about 5-fold by RNaseJ (rnj). Stimulates the dsRNase activity of RNase J. The polypeptide is DEAD-box ATP-dependent RNA helicase RhpA (rhpA) (Helicobacter pylori (strain B128)).